Here is a 492-residue protein sequence, read N- to C-terminus: Transmembrane protein 104 homolog (492 aa).

The Cytoplasmic portion of the chain corresponds to 1-18; sequence MQSNTDSSGTSGTYSQTV. The chain crosses the membrane as a helical span at residues 19–39; that stretch reads GLLYVFNLIVGTGALALPKAF. Residues 40–45 lie on the Extracellular side of the membrane; sequence QSAGWL. A helical membrane pass occupies residues 46–66; it reads LSISLLTFSAFMSYVAATFVI. Residues 67–114 are Cytoplasmic-facing; sequence EALSVANAVLSKKRRVEYDDVVVADGPSTFEIAKKVEVSEMASMFLSK. The helical transmembrane segment at 115–135 threads the bilayer; that stretch reads VSLVFSYFAIIIYLFGDLAIY. At 136–177 the chain is on the extracellular side; the sequence is STTVPKSAMNIVCSTINATIVKSSDPCHESWPEILTRMTVYR. Residue asparagine 152 is glycosylated (N-linked (GlcNAc...) asparagine). Residues 178 to 198 form a helical membrane-spanning segment; the sequence is FFVIVFVVVVCLPMVIAGITK. Residues 199-210 are Cytoplasmic-facing; that stretch reads TRHIQIMTTLSR. The chain crosses the membrane as a helical span at residues 211-231; it reads WAAFILMISLATMQLSSQGAA. The Extracellular segment spans residues 232–238; sequence AHPPAYN. A helical transmembrane segment spans residues 239–259; sequence FHGFGSLFGCAVYAFMCHHSI. Topologically, residues 260–275 are cytoplasmic; the sequence is PSLITPMRTKENVFGK. Residues 276-296 form a helical membrane-spanning segment; the sequence is IAVVYGIVGVFYFTLSLTGAF. Over 297 to 325 the chain is Extracellular; that stretch reads AFEHVQDIYTLNFLHDDNTSLVYSIIDYF. Residue asparagine 314 is glycosylated (N-linked (GlcNAc...) asparagine). Residues 326-346 form a helical membrane-spanning segment; sequence LALFPIITLTSSYPIIALTLI. The Cytoplasmic portion of the chain corresponds to 347-391; that stretch reads NNFKVVKDILCPKTGQENESLLEADNQVEDNDTDDEREARNGNPK. Acidic residues predominate over residues 367 to 382; the sequence is LLEADNQVEDNDTDDE. A disordered region spans residues 367 to 387; the sequence is LLEADNQVEDNDTDDEREARN. A helical membrane pass occupies residues 392–412; the sequence is TIFDVLVPTLVLALPTFLSLL. The Extracellular segment spans residues 413–415; that stretch reads TDD. The helical transmembrane segment at 416–436 threads the bilayer; sequence MLLLASITGSFPGVAVQFAIP. Residues 437–466 are Cytoplasmic-facing; sequence CLLVTAARKHARSVLNFPVPRKNNSPFQSR. The helical transmembrane segment at 467-487 threads the bilayer; the sequence is FWIMLISSWAGFSMIMVLLNL. The Extracellular portion of the chain corresponds to 488 to 492; sequence VGVKF.

Belongs to the TMEM104 family.

Its subcellular location is the membrane. The polypeptide is Transmembrane protein 104 homolog (Caenorhabditis briggsae).